The sequence spans 68 residues: MRTSYLLLFTLCLLLSEIASGGNFLTGLGHRSDHYNCVSSGGQCLYSACPIFTKIQGTCYGGKAKCCK.

The first 21 residues, 1–21, serve as a signal peptide directing secretion; sequence MRTSYLLLFTLCLLLSEIASG. The propeptide occupies 22 to 32; it reads GNFLTGLGHRS. Intrachain disulfides connect C37-C66, C44-C59, and C49-C67.

This sequence belongs to the beta-defensin family. In terms of assembly, monomer. Homodimer.

It localises to the secreted. The protein resides in the membrane. Has bactericidal activity. May act as a ligand for C-C chemokine receptor CCR6. Positively regulates the sperm motility and bactericidal activity in a CCR6-dependent manner. Binds to CCR6 and triggers Ca2+ mobilization in the sperm which is important for its motility. The polypeptide is Beta-defensin 1 (DEFB1) (Gorilla gorilla gorilla (Western lowland gorilla)).